A 441-amino-acid chain; its full sequence is tRNA (adenine(37)-N6)-methyltransferase (441 aa).

The TsaA-like domain occupies 30–168; sequence TEPVGYLESC…YIAEYDSPQN (139 aa). S-adenosyl-L-methionine contacts are provided by residues 47 to 49, 90 to 91, R117, L127, and 148 to 151; these read PRQ, HK, and IHGT. The span at 179–192 shows a compositional bias: polar residues; that stretch reads QNNQHTPNTVSQSD. Disordered regions lie at residues 179–231 and 264–284; these read QNNQ…EENY and SSVA…SEKG.

This sequence belongs to the tRNA methyltransferase O family.

It catalyses the reaction N(6)-L-threonylcarbamoyladenosine(37) in tRNA + S-adenosyl-L-methionine = N(6)-methyl,N(6)-L-threonylcarbamoyladenosine(37) in tRNA + S-adenosyl-L-homocysteine + H(+). S-adenosyl-L-methionine-dependent methyltransferase responsible for the addition of the methyl group in the formation of N6-methyl-N6-threonylcarbamoyladenosine at position 37 (m(6)t(6)A37) of the tRNA anticodon loop of tRNA(Ser)(GCU). The methyl group of m(6)t(6)A37 may improve the efficiency of the tRNA decoding ability. The chain is tRNA (adenine(37)-N6)-methyltransferase from Homo sapiens (Human).